The following is a 510-amino-acid chain: ATP synthase subunit alpha (510 aa).

Residue 169–176 (GDRQTGKT) coordinates ATP.

Belongs to the ATPase alpha/beta chains family. As to quaternary structure, F-type ATPases have 2 components, CF(1) - the catalytic core - and CF(0) - the membrane proton channel. CF(1) has five subunits: alpha(3), beta(3), gamma(1), delta(1), epsilon(1). CF(0) has three main subunits: a(1), b(2) and c(9-12). The alpha and beta chains form an alternating ring which encloses part of the gamma chain. CF(1) is attached to CF(0) by a central stalk formed by the gamma and epsilon chains, while a peripheral stalk is formed by the delta and b chains.

The protein localises to the cell inner membrane. The catalysed reaction is ATP + H2O + 4 H(+)(in) = ADP + phosphate + 5 H(+)(out). In terms of biological role, produces ATP from ADP in the presence of a proton gradient across the membrane. The alpha chain is a regulatory subunit. In Rickettsia massiliae (strain Mtu5), this protein is ATP synthase subunit alpha.